Consider the following 285-residue polypeptide: ATP phosphoribosyltransferase (285 aa).

Belongs to the ATP phosphoribosyltransferase family. Long subfamily. Mg(2+) is required as a cofactor.

It is found in the cytoplasm. It carries out the reaction 1-(5-phospho-beta-D-ribosyl)-ATP + diphosphate = 5-phospho-alpha-D-ribose 1-diphosphate + ATP. It participates in amino-acid biosynthesis; L-histidine biosynthesis; L-histidine from 5-phospho-alpha-D-ribose 1-diphosphate: step 1/9. Feedback inhibited by histidine. Catalyzes the condensation of ATP and 5-phosphoribose 1-diphosphate to form N'-(5'-phosphoribosyl)-ATP (PR-ATP). Has a crucial role in the pathway because the rate of histidine biosynthesis seems to be controlled primarily by regulation of HisG enzymatic activity. This Metallosphaera sedula (strain ATCC 51363 / DSM 5348 / JCM 9185 / NBRC 15509 / TH2) protein is ATP phosphoribosyltransferase.